A 695-amino-acid chain; its full sequence is Tail-specific protease (695 aa).

Positions 1-29 (MVMKFKMSKNVICYTWLSVCLSSAIPAFA) are cleaved as a signal peptide. A PDZ domain is found at 256–316 (IGTTLQSEDD…RLEDLVEKIK (61 aa)). Catalysis depends on charge relay system residues serine 459, aspartate 470, and lysine 484.

Belongs to the peptidase S41A family.

Its subcellular location is the cell inner membrane. The enzyme catalyses The enzyme shows specific recognition of a C-terminal tripeptide, Xaa-Yaa-Zaa, in which Xaa is preferably Ala or Leu, Yaa is preferably Ala or Tyr, and Zaa is preferably Ala, but then cleaves at a variable distance from the C-terminus. A typical cleavage is -Ala-Ala-|-Arg-Ala-Ala-Lys-Glu-Asn-Tyr-Ala-Leu-Ala-Ala.. Functionally, involved in the cleavage of a C-terminal peptide of 11 residues from the precursor form of penicillin-binding protein 3 (PBP3). May be involved in protection of the bacterium from thermal and osmotic stresses. This Haemophilus influenzae (strain ATCC 51907 / DSM 11121 / KW20 / Rd) protein is Tail-specific protease (prc).